We begin with the raw amino-acid sequence, 1541 residues long: Multiple epidermal growth factor-like domains protein 6 (1541 aa).

Residues 1 to 30 form the signal peptide; it reads MSFLEEARAAGRAVVLALVLLLLPAVPVGA. The 82-residue stretch at 44-125 folds into the EMI domain; the sequence is MPHVCAEQEL…QQPDEEGCLS (82 aa). 15 cysteine pairs are disulfide-bonded: cysteine 48–cysteine 111, cysteine 77–cysteine 83, cysteine 110–cysteine 123, cysteine 128–cysteine 139, cysteine 133–cysteine 147, cysteine 149–cysteine 158, cysteine 165–cysteine 176, cysteine 172–cysteine 185, cysteine 187–cysteine 200, cysteine 242–cysteine 255, cysteine 248–cysteine 268, cysteine 270–cysteine 283, cysteine 289–cysteine 300, cysteine 296–cysteine 309, and cysteine 311–cysteine 324. The 36-residue stretch at 124–159 folds into the EGF-like 1 domain; sequence LSAECSASLCFHGGRCVPGSAQPCHCPPGFQGPRCQ. In terms of domain architecture, EGF-like 2; calcium-binding spans 161–201; it reads DVDECRTHNGGCQHRCVNTPGSYLCECKPGFRLHTDSRTCL. 2 consecutive EGF-like domains span residues 206-242 and 238-284; these read CALG…GRHC and DGRH…KACE. An N-linked (GlcNAc...) asparagine glycan is attached at asparagine 252. One can recognise an EGF-like 5; calcium-binding domain in the interval 285 to 325; sequence DVDECAAGLAQCAHGCLNTQGSFKCVCHAGYELGADGRQCY. EGF-like domains lie at 335-370 and 375-411; these read CEAN…QRTC and DCAD…CGCE. One can recognise an EGF-like 8; calcium-binding domain in the interval 412-452; the sequence is DVDECASSRGGCEHHCTNLAGSFQCSCEAGYRLHEDRRGCS. Cystine bridges form between cysteine 416–cysteine 427, cysteine 423–cysteine 436, cysteine 438–cysteine 451, cysteine 520–cysteine 533, cysteine 527–cysteine 540, cysteine 542–cysteine 551, cysteine 564–cysteine 576, cysteine 570–cysteine 583, cysteine 585–cysteine 594, cysteine 607–cysteine 619, cysteine 613–cysteine 626, and cysteine 628–cysteine 637. EGF-like domains lie at 516 to 552, 560 to 595, 603 to 638, 736 to 770, 783 to 814, 822 to 857, 865 to 901, 909 to 944, 955 to 987, 995 to 1030, 1038 to 1073, 1081 to 1116, 1124 to 1159, 1211 to 1246, 1254 to 1289, 1297 to 1332, 1345 to 1375, 1383 to 1418, and 1469 to 1504; these read FGHD…LICN, FGKN…TNCE, YGKH…RFCH, FGVN…EDCE, QEIC…SRCQ, YGPS…FSCQ, WGPD…PRCE, FGPG…TFCE, DCRS…PRCA, YGHN…PSCL, YGDN…LACE, VRAG…DKCQ, FGEA…SGCE, YGPG…TDCN, FGPN…VRCE, FGVG…RHCE, HLEC…QACE, HGAG…HFCE, and FGPS…PTCR. N-linked (GlcNAc...) asparagine glycosylation is present at asparagine 739. 15 cysteine pairs are disulfide-bonded: cysteine 740/cysteine 751, cysteine 744/cysteine 758, cysteine 760/cysteine 769, cysteine 786/cysteine 795, cysteine 789/cysteine 802, cysteine 804/cysteine 813, cysteine 826/cysteine 838, cysteine 832/cysteine 845, cysteine 847/cysteine 856, cysteine 869/cysteine 882, cysteine 873/cysteine 889, cysteine 891/cysteine 900, cysteine 913/cysteine 925, cysteine 919/cysteine 932, and cysteine 934/cysteine 943. Disulfide bonds link cysteine 999–cysteine 1011, cysteine 1005–cysteine 1018, cysteine 1020–cysteine 1029, cysteine 1042–cysteine 1054, cysteine 1048–cysteine 1061, cysteine 1063–cysteine 1072, cysteine 1085–cysteine 1097, cysteine 1091–cysteine 1104, cysteine 1106–cysteine 1115, cysteine 1128–cysteine 1140, cysteine 1134–cysteine 1147, cysteine 1149–cysteine 1158, cysteine 1215–cysteine 1227, cysteine 1221–cysteine 1234, cysteine 1236–cysteine 1245, cysteine 1258–cysteine 1270, cysteine 1264–cysteine 1277, cysteine 1279–cysteine 1288, cysteine 1301–cysteine 1313, cysteine 1307–cysteine 1320, cysteine 1322–cysteine 1331, cysteine 1348–cysteine 1356, cysteine 1350–cysteine 1363, cysteine 1365–cysteine 1374, cysteine 1387–cysteine 1399, cysteine 1393–cysteine 1406, cysteine 1408–cysteine 1417, cysteine 1473–cysteine 1485, cysteine 1479–cysteine 1492, and cysteine 1494–cysteine 1503. Residues 1509–1541 are disordered; the sequence is LRLPENPSLAQGSAGTLPASSRPTSRSGGPARH. The span at 1516 to 1535 shows a compositional bias: polar residues; the sequence is SLAQGSAGTLPASSRPTSRS.

The protein localises to the secreted. The chain is Multiple epidermal growth factor-like domains protein 6 (MEGF6) from Homo sapiens (Human).